The chain runs to 344 residues: Uroporphyrinogen decarboxylase (344 aa).

Substrate-binding positions include 27-31, F46, D76, Y151, S206, and H319; that span reads RQAGR.

Belongs to the uroporphyrinogen decarboxylase family. In terms of assembly, homodimer.

It is found in the cytoplasm. It catalyses the reaction uroporphyrinogen III + 4 H(+) = coproporphyrinogen III + 4 CO2. Its pathway is porphyrin-containing compound metabolism; protoporphyrin-IX biosynthesis; coproporphyrinogen-III from 5-aminolevulinate: step 4/4. In terms of biological role, catalyzes the decarboxylation of four acetate groups of uroporphyrinogen-III to yield coproporphyrinogen-III. The sequence is that of Uroporphyrinogen decarboxylase from Halalkalibacterium halodurans (strain ATCC BAA-125 / DSM 18197 / FERM 7344 / JCM 9153 / C-125) (Bacillus halodurans).